The chain runs to 253 residues: Acidic endochitinase pcht28 (253 aa).

The signal sequence occupies residues 1–24 (MKFNIVSPVALSCLFFLFLTGTLA). Glutamate 92 (proton donor) is an active-site residue. An intrachain disulfide couples cysteine 212 to cysteine 244.

It belongs to the glycosyl hydrolase 19 family. Chitinase class II subfamily.

The protein localises to the secreted. It is found in the extracellular space. The catalysed reaction is Random endo-hydrolysis of N-acetyl-beta-D-glucosaminide (1-&gt;4)-beta-linkages in chitin and chitodextrins.. Its function is as follows. Defense against chitin-containing fungal pathogens. This Solanum chilense (Tomato) protein is Acidic endochitinase pcht28.